The chain runs to 314 residues: Splicing factor YJU2 (314 aa).

Zn(2+)-binding residues include cysteine 43, cysteine 46, cysteine 80, and cysteine 83. Disordered stretches follow at residues 178-238 (MSQE…NEVP) and 253-314 (LAGL…DSDS). The span at 200-209 (EEARHRRLLE) shows a compositional bias: basic and acidic residues. Phosphoserine occurs at positions 211, 213, and 220. Positions 222 to 232 (PRAAARPNPTA) are enriched in low complexity. Polar residues predominate over residues 290-302 (PTPQTPGTSSLSQ). Residues serine 309, serine 312, and serine 314 each carry the phosphoserine modification.

The protein belongs to the CWC16 family. YJU2 subfamily. In terms of assembly, component of the spliceosome. Present in the activated B complex, the catalytically activated B* complex which catalyzes the branching, the catalytic step 1 C complex catalyzing the exon ligation, and the postcatalytic P complex containing the ligated exons (mRNA) and the excised lariat intron.

It localises to the nucleus. Functionally, part of the spliceosome which catalyzes two sequential transesterification reactions, first the excision of the non-coding intron from pre-mRNA and then the ligation of the coding exons to form the mature mRNA. Plays a role in stabilizing the structure of the spliceosome catalytic core and docking of the branch helix into the active site, producing 5'-exon and lariat intron-3'-intermediates. May protect cells from TP53-dependent apoptosis upon dsDNA break damage through association with PRP19-CD5L complex. The polypeptide is Splicing factor YJU2 (Mus musculus (Mouse)).